Consider the following 215-residue polypeptide: Cytochrome b6 (215 aa).

The helical transmembrane segment at Ile-32 to Phe-52 threads the bilayer. Cys-35 serves as a coordination point for heme c. Residues His-86 and His-100 each coordinate heme b. 3 helical membrane-spanning segments follow: residues Ala-90–Phe-110, Leu-116–Tyr-136, and Leu-186–Ile-206. Heme b is bound by residues His-187 and His-202.

It belongs to the cytochrome b family. PetB subfamily. As to quaternary structure, the 4 large subunits of the cytochrome b6-f complex are cytochrome b6, subunit IV (17 kDa polypeptide, PetD), cytochrome f and the Rieske protein, while the 4 small subunits are PetG, PetL, PetM and PetN. The complex functions as a dimer. The cofactor is heme b. It depends on heme c as a cofactor.

It is found in the plastid. The protein localises to the chloroplast thylakoid membrane. Component of the cytochrome b6-f complex, which mediates electron transfer between photosystem II (PSII) and photosystem I (PSI), cyclic electron flow around PSI, and state transitions. In Huperzia lucidula (Shining clubmoss), this protein is Cytochrome b6.